We begin with the raw amino-acid sequence, 465 residues long: Cerebellar degeneration-related protein 2-like (465 aa).

Coiled coils occupy residues 38–143 (LLER…EQLR) and 188–265 (LEQE…TYLL). Positions 282 to 314 (APEADDPQPGRGDDLGAQDGVSSPAASPGHVVR) are disordered. A phosphoserine mark is found at Ser308, Ser318, and Ser344. The stretch at 350–377 (MSILREVDEQYHALLEKYEELLSKCRQH) forms a coiled coil. Residues 382–417 (RHAGVQTSRPISRDSSWRDLRGGEEGQGEVKAGEKS) are disordered. Basic and acidic residues predominate over residues 392-405 (ISRDSSWRDLRGGE).

Belongs to the CDR2 family.

This chain is Cerebellar degeneration-related protein 2-like (CDR2L), found in Homo sapiens (Human).